Consider the following 430-residue polypeptide: Delta(14)-sterol reductase (430 aa).

The next 6 membrane-spanning stretches (helical) occupy residues Ile-12 to Ile-32, Leu-67 to Ile-87, Phe-109 to Phe-129, Phe-230 to Leu-250, Leu-267 to Ala-287, and Leu-290 to Phe-310. Residues Lys-323, Arg-327, Leu-350, Trp-355, and Asn-362–Tyr-363 each bind NADP(+). A run of 2 helical transmembrane segments spans residues Leu-349–Met-369 and Thr-376–Leu-396. Residues Asp-402, Cys-406–Tyr-410, and Tyr-417 each bind NADP(+).

The protein belongs to the ERG4/ERG24 family.

It localises to the membrane. It catalyses the reaction 4,4-dimethyl-5alpha-cholesta-8,24-dien-3beta-ol + NADP(+) = 4,4-dimethyl-5alpha-cholesta-8,14,24-trien-3beta-ol + NADPH + H(+). The protein operates within steroid biosynthesis; zymosterol biosynthesis; zymosterol from lanosterol: step 2/6. Its function is as follows. Reduces the C14=C15 double bond of 4,4-dimethyl-cholesta-8,14,24-trienol to produce 4,4-dimethyl-cholesta-8,24-dienol. This Ascobolus immersus protein is Delta(14)-sterol reductase (ERG3).